The sequence spans 187 residues: Protein SCM4 (187 aa).

A run of 3 helical transmembrane segments spans residues 11–31, 45–65, and 80–100; these read IAVS…VISI, VLCT…GAFG, and LLCG…VSLF. Residues 114–134 are compositionally biased toward basic and acidic residues; the sequence is DLEKQKDEKLPQHHPEVKDGE. The interval 114 to 135 is disordered; sequence DLEKQKDEKLPQHHPEVKDGEA. A helical membrane pass occupies residues 162–182; that stretch reads MSLHMSIVTGITIFTFGKCIL.

The protein belongs to the ATG33 family.

It is found in the membrane. The protein is Protein SCM4 (SCM4) of Saccharomyces cerevisiae (strain ATCC 204508 / S288c) (Baker's yeast).